A 160-amino-acid chain; its full sequence is RTX-II toxin-activating lysine-acyltransferase ApxIIC (160 aa).

Catalysis depends on residues His-23 and Asp-92.

It belongs to the RTX toxin acyltransferase family. In terms of assembly, homodimer.

The protein localises to the cytoplasm. It catalyses the reaction a fatty acyl-[ACP] + L-lysyl-[protein] = N(6)-(fatty acyl)-L-lysyl-[protein] + holo-[ACP] + H(+). Functionally, protein-lysine acyltransferase that catalyzes fatty acylation of the protoxin, thereby converting it to the active toxin. The chain is RTX-II toxin-activating lysine-acyltransferase ApxIIC (apxIIC) from Actinobacillus pleuropneumoniae (Haemophilus pleuropneumoniae).